Reading from the N-terminus, the 336-residue chain is Fructose-1,6-bisphosphatase class 1 (336 aa).

Mg(2+)-binding residues include E92, D115, L117, and D118. Substrate contacts are provided by residues 118 to 121 (DGSS), N211, Y244, 262 to 264 (YLY), and K274. Mg(2+) is bound at residue E280.

It belongs to the FBPase class 1 family. In terms of assembly, homotetramer. It depends on Mg(2+) as a cofactor.

Its subcellular location is the cytoplasm. It carries out the reaction beta-D-fructose 1,6-bisphosphate + H2O = beta-D-fructose 6-phosphate + phosphate. The protein operates within carbohydrate biosynthesis; gluconeogenesis. This is Fructose-1,6-bisphosphatase class 1 from Vibrio cholerae serotype O1 (strain ATCC 39315 / El Tor Inaba N16961).